A 438-amino-acid polypeptide reads, in one-letter code: Keratin, type I cytoskeletal 18 (438 aa).

The tract at residues 4–83 is head; sequence AVSSRSTVVS…TLSGNAVISN (80 aa). The segment at 84–119 is coil 1A; that stretch reads EKETMQDLNDRLSNYLETVRRLENANQQLEIQIREA. The IF rod domain occupies 84-395; the sequence is EKETMQDLND…HLLGGEDSDT (312 aa). Positions 120–136 are linker 1; it reads MEKRGPSVRDYSNYEKI. Residues 137–228 are coil 1B; the sequence is IKELRDQIYD…KNHEDEVIAL (92 aa). Positions 229-252 are linker 12; that stretch reads RNQVNSCGVQVDLDAPKGTDLAEI. The tract at residues 253–393 is coil 2; it reads MATLRAEYEA…YRHLLGGEDS (141 aa). Residues 394-438 are tail; that stretch reads DTLSLQDALSAMKVSNVQTVQKIVVTTQKLVDGKVVEDSTVTETK.

It belongs to the intermediate filament family. In terms of assembly, heterotetramer of two type I and two type II keratins. Keratin-18 associates with keratin-8. Phosphorylated. In terms of processing, proteolytically cleaved by caspases during epithelial cell apoptosis. Expressed at low levels in skin.

When phosphorylated, plays a role in filament reorganization. The chain is Keratin, type I cytoskeletal 18 from Protopterus aethiopicus (Marbled lungfish).